A 190-amino-acid polypeptide reads, in one-letter code: Class III hydrophobin F (190 aa).

Positions 1 to 18 (MRPITILCTLATLSTTLA) are cleaved as a signal peptide. 4 disulfide bridges follow: Cys-54-Cys-115, Cys-62-Cys-109, Cys-63-Cys-97, and Cys-116-Cys-131.

It belongs to the fungal hydrophobin family. As to quaternary structure, self-assembles to form functional amyloid fibrils called rodlets. Self-assembly into fibrillar rodlets occurs spontaneously at hydrophobic:hydrophilic interfaces and the rodlets further associate laterally to form amphipathic monolayers.

It is found in the secreted. The protein localises to the cell wall. Functionally, aerial growth, conidiation, and dispersal of filamentous fungi in the environment rely upon a capability of their secreting small amphipathic proteins called hydrophobins (HPBs) with low sequence identity. Class I can self-assemble into an outermost layer of rodlet bundles on aerial cell surfaces, conferring cellular hydrophobicity that supports fungal growth, development and dispersal; whereas Class II form highly ordered films at water-air interfaces through intermolecular interactions but contribute nothing to the rodlet structure. RodF and rodG belong to Class III, which contains hydrophobins with intermediate (between classes I and II) or atypical characteristics. RodF, unlike rodA, is not required for rodlet formation. This Aspergillus fumigatus (strain ATCC MYA-4609 / CBS 101355 / FGSC A1100 / Af293) (Neosartorya fumigata) protein is Class III hydrophobin F.